The following is a 256-amino-acid chain: MGRVIRAQRKGAGSVFKAHVKKRKGAAKLRSLDFAERSGYIRGVVKDIIHDPGRGAPLAVVHFRDPYRYKIRKELFIAPEGMHTGQFVYCGRKATLQIGNVMPLSQMPEGTIICNLEEKTGDRGRLARTSGNYATVIAHNQDTKKTRVKLPSGAKKVVPSANRAMVGIVAGGGRIDKPILKAGRAYHKYKVKRNSWPKVRGVAMNPVEHPHGGGNHQHIGKASTVKRGTSAGRKVGLIAARRTGRIRGGKGDSKDK.

The segment at glutamate 208–serine 230 is disordered.

It belongs to the universal ribosomal protein uL2 family. As to expression, in larvae tissues examined: gut, brain imaginal disk, salivary glands, fat body, muscles, epidermis and trachaea.

Its subcellular location is the cytoplasm. This Drosophila melanogaster (Fruit fly) protein is Large ribosomal subunit protein uL2 (RpL8).